The sequence spans 199 residues: Elongation factor Ts, chloroplastic (199 aa).

Belongs to the EF-Ts family.

The protein resides in the plastid. It is found in the chloroplast. Its function is as follows. Associates with the EF-Tu.GDP complex and induces the exchange of GDP to GTP. It remains bound to the aminoacyl-tRNA.EF-Tu.GTP complex up to the GTP hydrolysis stage on the ribosome. In Galdieria sulphuraria (Red alga), this protein is Elongation factor Ts, chloroplastic (tsf).